Reading from the N-terminus, the 281-residue chain is Aldo-keto reductase MMAR_1744 (281 aa).

Residue tyrosine 56 is the Proton donor of the active site. Residues leucine 196, isoleucine 234, serine 237, threonine 245, asparagine 246, and arginine 272 each contribute to the NADPH site.

Belongs to the aldo/keto reductase family.

In Mycobacterium marinum (strain ATCC BAA-535 / M), this protein is Aldo-keto reductase MMAR_1744.